The sequence spans 220 residues: Small ribosomal subunit protein uS2 (220 aa).

Belongs to the universal ribosomal protein uS2 family.

The sequence is that of Small ribosomal subunit protein uS2 from Methanococcus maripaludis (strain C5 / ATCC BAA-1333).